Reading from the N-terminus, the 205-residue chain is Holliday junction branch migration complex subunit RuvA (205 aa).

The segment at 1-64 is domain I; the sequence is MIGKLKGVID…EDQIKLFGFR (64 aa). The tract at residues 65–143 is domain II; the sequence is SDIEREWFRL…AFANVDPAVV (79 aa). The segment at 144–154 is flexible linker; that stretch reads HLAGAVDDDRA. A domain III region spans residues 154–205; that stretch reads APRPVKDAISALVNLGYGQPQAAAAIASVARDAGEGAETAQLIRLGLKELAK.

This sequence belongs to the RuvA family. As to quaternary structure, homotetramer. Forms an RuvA(8)-RuvB(12)-Holliday junction (HJ) complex. HJ DNA is sandwiched between 2 RuvA tetramers; dsDNA enters through RuvA and exits via RuvB. An RuvB hexamer assembles on each DNA strand where it exits the tetramer. Each RuvB hexamer is contacted by two RuvA subunits (via domain III) on 2 adjacent RuvB subunits; this complex drives branch migration. In the full resolvosome a probable DNA-RuvA(4)-RuvB(12)-RuvC(2) complex forms which resolves the HJ.

Its subcellular location is the cytoplasm. Functionally, the RuvA-RuvB-RuvC complex processes Holliday junction (HJ) DNA during genetic recombination and DNA repair, while the RuvA-RuvB complex plays an important role in the rescue of blocked DNA replication forks via replication fork reversal (RFR). RuvA specifically binds to HJ cruciform DNA, conferring on it an open structure. The RuvB hexamer acts as an ATP-dependent pump, pulling dsDNA into and through the RuvAB complex. HJ branch migration allows RuvC to scan DNA until it finds its consensus sequence, where it cleaves and resolves the cruciform DNA. The chain is Holliday junction branch migration complex subunit RuvA from Afipia carboxidovorans (strain ATCC 49405 / DSM 1227 / KCTC 32145 / OM5) (Oligotropha carboxidovorans).